The following is a 745-amino-acid chain: Junction plakoglobin (745 aa).

Met-1 carries the N-acetylmethionine modification. A glycan (O-linked (GlcNAc) threonine) is linked at Thr-14. Phosphoserine is present on residues Ser-99 and Ser-125. 12 ARM repeats span residues Asn-132–Lys-171, Lys-172–His-215, Arg-216–Leu-255, Glu-258–Tyr-297, Gly-298–Cys-341, Pro-342–Asp-381, Ala-383–Cys-420, Ser-423–Ser-464, Glu-470–Leu-510, Pro-512–Thr-551, Pro-574–Gln-613, and Lys-615–Arg-661. The interval Asn-132–Tyr-297 is interaction with DSC1 and DSG1. Phosphoserine is present on Ser-182. Positions Pro-574–Arg-661 are interaction with DSC1. Phosphoserine is present on residues Ser-665 and Ser-730.

It belongs to the beta-catenin family. As to quaternary structure, homodimer. Component of an E-cadherin/catenin adhesion complex composed of at least E-cadherin/CDH1 and gamma-catenin/JUP, and possibly alpha-catenin/CTNNA1; the complex is located to adherens junctions. The stable association of CTNNA1 is controversial as CTNNA1 was shown not to bind to F-actin when assembled in the complex. Interacts with MUC1. Interacts with CAV1. Interacts with PTPRJ. Interacts with DSG1. Interacts with DSC1 and DSC2. Interacts with PKP2. Interacts with PKP3 (via N-terminus); the interaction is required for PKP3 localization to desmosome cell-cell junctions. Interacts with DSG4. In terms of processing, may be phosphorylated by FER. Expressed in the heart (at protein level).

Its subcellular location is the cell junction. The protein localises to the adherens junction. It localises to the desmosome. The protein resides in the cytoplasm. It is found in the cytoskeleton. Its subcellular location is the cell membrane. The protein localises to the nucleus. Common junctional plaque protein. The membrane-associated plaques are architectural elements in an important strategic position to influence the arrangement and function of both the cytoskeleton and the cells within the tissue. The presence of plakoglobin in both the desmosomes and in the intermediate junctions suggests that it plays a central role in the structure and function of submembranous plaques. Acts as a substrate for VE-PTP and is required by it to stimulate VE-cadherin function in endothelial cells. Can replace beta-catenin in E-cadherin/catenin adhesion complexes which are proposed to couple cadherins to the actin cytoskeleton. The polypeptide is Junction plakoglobin (Homo sapiens (Human)).